The chain runs to 156 residues: Cyanate hydratase (156 aa).

Catalysis depends on residues arginine 96, glutamate 99, and serine 122.

This sequence belongs to the cyanase family.

The enzyme catalyses cyanate + hydrogencarbonate + 3 H(+) = NH4(+) + 2 CO2. Its function is as follows. Catalyzes the reaction of cyanate with bicarbonate to produce ammonia and carbon dioxide. The sequence is that of Cyanate hydratase from Escherichia coli O9:H4 (strain HS).